Reading from the N-terminus, the 225-residue chain is uncharacterized protein (225 aa).

The interval 32–82 (PKDKKKQNDTENKKKQPKDGENDKQKEQAETQPFEWIQQKDADDKKESNTA) is disordered. Composition is skewed to basic and acidic residues over residues 37–60 (KQNDTENKKKQPKDGENDKQKEQA) and 69–79 (QQKDADDKKES).

Belongs to the MG067/MG068/MG395 family.

This is an uncharacterized protein from Mycoplasma pneumoniae (strain ATCC 29342 / M129 / Subtype 1) (Mycoplasmoides pneumoniae).